A 187-amino-acid chain; its full sequence is Transmembrane protein 17A (187 aa).

Transmembrane regions (helical) follow at residues 49-69 (IFLY…VIML), 82-102 (FILV…LYLG), 114-134 (LAGF…FLLC), and 146-166 (AVHG…IFAL).

It belongs to the TMEM17 family. Part of the tectonic-like complex (also named B9 complex).

It is found in the cell projection. The protein resides in the cilium membrane. In terms of biological role, transmembrane component of the tectonic-like complex, a complex localized at the transition zone of primary cilia and acting as a barrier that prevents diffusion of transmembrane proteins between the cilia and plasma membranes. Required for ciliogenesis and sonic hedgehog/SHH signaling. In Xenopus tropicalis (Western clawed frog), this protein is Transmembrane protein 17A (tmem17-a).